The chain runs to 439 residues: Xylose isomerase (439 aa).

Residues histidine 101 and aspartate 104 contribute to the active site. 7 residues coordinate Mg(2+): glutamate 232, glutamate 268, histidine 271, aspartate 296, aspartate 307, aspartate 309, and aspartate 339.

This sequence belongs to the xylose isomerase family. Homotetramer. Mg(2+) serves as cofactor.

Its subcellular location is the cytoplasm. It catalyses the reaction alpha-D-xylose = alpha-D-xylulofuranose. The sequence is that of Xylose isomerase from Actinobacillus pleuropneumoniae serotype 5b (strain L20).